The chain runs to 1112 residues: Zinc finger protein 654 (1112 aa).

The segment at 482–514 is disordered; it reads PSSSLKKRVDQQSVEEDQSTGETDPDDASVVQP. Over residues 494–508 the composition is skewed to acidic residues; the sequence is SVEEDQSTGETDPDD. 5 C2H2-type zinc fingers span residues 566–588, 738–763, 779–801, 807–831, and 836–860; these read FACV…LKNH, FKCP…RTVH, GKCK…LNRH, YFCL…TKSH, and AQCS…EAQH. 2 disordered regions span residues 885-906 and 997-1018; these read FSNE…KYST and VESQ…NLTS. Polar residues-rich tracts occupy residues 886–899 and 1002–1018; these read SNEN…VSTS and HSAL…NLTS. Phosphoserine occurs at positions 1107 and 1111.

The protein belongs to the krueppel C2H2-type zinc-finger protein family.

It is found in the nucleus. Its function is as follows. May be involved in transcriptional regulation. The protein is Zinc finger protein 654 of Mus musculus (Mouse).